We begin with the raw amino-acid sequence, 754 residues long: 5-methyltetrahydropteroyltriglutamate--homocysteine methyltransferase (754 aa).

Residues 17 to 20 (RELK) and K117 contribute to the 5-methyltetrahydropteroyltri-L-glutamate site. L-homocysteine-binding positions include 431-433 (IGS) and E484. Residues 431-433 (IGS) and E484 contribute to the L-methionine site. Residues 515 to 516 (RC) and W561 each bind 5-methyltetrahydropteroyltri-L-glutamate. D599 is a binding site for L-homocysteine. D599 serves as a coordination point for L-methionine. E605 lines the 5-methyltetrahydropteroyltri-L-glutamate pocket. The Zn(2+) site is built by H641, C643, and E665. The active-site Proton donor is the H694. C726 is a Zn(2+) binding site.

It belongs to the vitamin-B12 independent methionine synthase family. Requires Zn(2+) as cofactor.

It catalyses the reaction 5-methyltetrahydropteroyltri-L-glutamate + L-homocysteine = tetrahydropteroyltri-L-glutamate + L-methionine. Its pathway is amino-acid biosynthesis; L-methionine biosynthesis via de novo pathway; L-methionine from L-homocysteine (MetE route): step 1/1. In terms of biological role, catalyzes the transfer of a methyl group from 5-methyltetrahydrofolate to homocysteine resulting in methionine formation. The polypeptide is 5-methyltetrahydropteroyltriglutamate--homocysteine methyltransferase (Klebsiella pneumoniae subsp. pneumoniae (strain ATCC 700721 / MGH 78578)).